A 140-amino-acid chain; its full sequence is Ribosome maturation factor RimP (140 aa).

Belongs to the RimP family.

It localises to the cytoplasm. In terms of biological role, required for maturation of 30S ribosomal subunits. This chain is Ribosome maturation factor RimP, found in Campylobacter jejuni subsp. doylei (strain ATCC BAA-1458 / RM4099 / 269.97).